A 418-amino-acid chain; its full sequence is MANKLRNYTINFGPQHPAAHGVLRMILELDGEQIVRADPHIGLLHRGTEKLAETKTYLQALPYMDRLDYVSMMVNEQAYCLAVEKLAGIDVPIRAQYIRVMFAEVTRILNHLMGIGSHAFDIGAMTAILYAFRDREELMDLYEAVSGARMHAAYFRPGGVYRDLPDFMPKYESSKFRNAKVLKQLNESREGTMLDFIDAFCERFPKNIDTLETLLTDNRIWKQRTVGIGVVSPERAMQKGFTGVMLRGSGVEWDVRKTQPYEVYDKMDFDIPVGVNGDCYDRYLCRMEEMRQSVRIIKQCSEWLRVNPGPVITTNHKFAPPKRTEMKTGMEDLIHHFKLFTEGMHVPEGETYTAVEHPKGEFGVYIISDGANKPYRLKIRAPGFAHLQGMDEMAKGHMLADVVAIIGTQDIVFGEVDR.

Belongs to the complex I 49 kDa subunit family. In terms of assembly, NDH-1 is composed of 14 different subunits. Subunits NuoB, C, D, E, F, and G constitute the peripheral sector of the complex.

It is found in the cell inner membrane. It carries out the reaction a quinone + NADH + 5 H(+)(in) = a quinol + NAD(+) + 4 H(+)(out). NDH-1 shuttles electrons from NADH, via FMN and iron-sulfur (Fe-S) centers, to quinones in the respiratory chain. The immediate electron acceptor for the enzyme in this species is believed to be ubiquinone. Couples the redox reaction to proton translocation (for every two electrons transferred, four hydrogen ions are translocated across the cytoplasmic membrane), and thus conserves the redox energy in a proton gradient. This is NADH-quinone oxidoreductase subunit D from Neisseria meningitidis serogroup A / serotype 4A (strain DSM 15465 / Z2491).